The primary structure comprises 169 residues: MERAIFAGGCFWCMVQPFEEQAGILSVRSGYTGGHLPNPSYEQVCAKTTGHTEAVEIIFDPKQIAYKDLVELYWAQTDPTDAFGQFEDRGDNYRPVIYYTTERQKEIAEQSKASLQASGRFDQPIVTTIEPAEPFYLAEDYHQGFYKKNPKRYAQSSAIRHQFLEENWS.

Cys-10 is an active-site residue.

The protein belongs to the MsrA Met sulfoxide reductase family.

It carries out the reaction L-methionyl-[protein] + [thioredoxin]-disulfide + H2O = L-methionyl-(S)-S-oxide-[protein] + [thioredoxin]-dithiol. The enzyme catalyses [thioredoxin]-disulfide + L-methionine + H2O = L-methionine (S)-S-oxide + [thioredoxin]-dithiol. In terms of biological role, has an important function as a repair enzyme for proteins that have been inactivated by oxidation. Catalyzes the reversible oxidation-reduction of methionine sulfoxide in proteins to methionine. This is Peptide methionine sulfoxide reductase MsrA from Streptococcus pyogenes serotype M2 (strain MGAS10270).